The primary structure comprises 143 residues: uncharacterized protein (143 aa).

The N-terminal stretch at 1-27 (MSDEIARLVADVFELAGLLRRSGEVVA) is a signal peptide.

This is an uncharacterized protein from Mycobacterium tuberculosis (strain CDC 1551 / Oshkosh).